We begin with the raw amino-acid sequence, 347 residues long: MNPLALSLILTTLFTGTLITMMSSHWLTAWMGLEMNMLTMIPILMKTTNPRSTEAATKYFMTQATASMMLMMALTINLMYSGQWSITKMTNPVASNVALMALMTKLGSAPFHFWVPEVTQGVELTPGMILLTWQKLAPLSLLYQMATYTNTNLIYLSGLLSILIGGWGGLNQTQLRKILAYSSISHMGWMLIILPFNPTLTLLNLAIYILLTLSIFMILANTFTTSMSSLTLMWNKTPAMTIMLMTTLLSLGGLPPLSGFTPKWLMIHELTKNNSIIMPLTMAIMTLLNMYFYTRLIYYSSLTILPSTNNMKMTWQFTNTKHTMMLPTLITLSNMLLPLTPMISMLE.

9 consecutive transmembrane segments (helical) span residues 3 to 23, 59 to 79, 93 to 115, 150 to 170, 178 to 198, 200 to 220, 240 to 260, 274 to 294, and 326 to 346; these read PLAL…TMMS, YFMT…INLM, VASN…HFWV, NTNL…WGGL, ILAY…PFNP, LTLL…MILA, MTIM…LSGF, NSII…YFYT, and LPTL…ISML.

It belongs to the complex I subunit 2 family. Core subunit of respiratory chain NADH dehydrogenase (Complex I) which is composed of 45 different subunits. Interacts with TMEM242.

It is found in the mitochondrion inner membrane. It catalyses the reaction a ubiquinone + NADH + 5 H(+)(in) = a ubiquinol + NAD(+) + 4 H(+)(out). In terms of biological role, core subunit of the mitochondrial membrane respiratory chain NADH dehydrogenase (Complex I) which catalyzes electron transfer from NADH through the respiratory chain, using ubiquinone as an electron acceptor. Essential for the catalytic activity and assembly of complex I. This is NADH-ubiquinone oxidoreductase chain 2 from Elephas maximus (Indian elephant).